The following is a 443-amino-acid chain: Ribosomal protein uS12 methylthiotransferase RimO (443 aa).

One can recognise an MTTase N-terminal domain in the interval 9 to 119; the sequence is PKIGMVSLGC…VVSAVHDAAP (111 aa). [4Fe-4S] cluster is bound by residues Cys18, Cys54, Cys83, Cys150, Cys154, and Cys157. The Radical SAM core domain maps to 136-373; sequence LTPRHYSYLK…MEKAAQISEA (238 aa). The region spanning 376 to 443 is the TRAM domain; it reads QAKIGRDIAT…EHDLFGVALS (68 aa).

Belongs to the methylthiotransferase family. RimO subfamily. The cofactor is [4Fe-4S] cluster.

Its subcellular location is the cytoplasm. It catalyses the reaction L-aspartate(89)-[ribosomal protein uS12]-hydrogen + (sulfur carrier)-SH + AH2 + 2 S-adenosyl-L-methionine = 3-methylsulfanyl-L-aspartate(89)-[ribosomal protein uS12]-hydrogen + (sulfur carrier)-H + 5'-deoxyadenosine + L-methionine + A + S-adenosyl-L-homocysteine + 2 H(+). Catalyzes the methylthiolation of an aspartic acid residue of ribosomal protein uS12. The polypeptide is Ribosomal protein uS12 methylthiotransferase RimO (Zymomonas mobilis subsp. mobilis (strain ATCC 31821 / ZM4 / CP4)).